The sequence spans 325 residues: MPNIVLFSGSSHHDLSQRVADRLGLELGKVVTKKFSNQETSVEIGESVRGEDVYIIQSGCGEINDNLMELLIMINACKIASSSRVTAVIPCFPYARQDKKDKKGAVERWSRAPISAKLVANMLSVAGADHIITMDLHASQIQGFFDIPVDNLYAEPAVLQWIKENILEWKNCIIVSPDAGGAKRVTSIADRLNVEFALIHKERKKANEVDRMVLVGDVKDRVAILVDDMADTCGTICHAADKLVSAGATKVYAILTHGIFSGPAISRINNAAFEAVVVTNTIPQEEKMKHCPKIQFIDISMILAEAIRRTHNGESVSYLFSHVPL.

96–101 (RQDKKD) contributes to the ATP binding site. The Mg(2+) site is built by Asp135, His137, Asp146, and Asp150. ATP is bound at residue His137. Residues 219 to 234 (KDRVAILVDDMADTCG) are binding of phosphoribosylpyrophosphate.

It belongs to the ribose-phosphate pyrophosphokinase family. Homodimer. The active form is probably a hexamer composed of 3 homodimers. Mg(2+) is required as a cofactor.

The enzyme catalyses D-ribose 5-phosphate + ATP = 5-phospho-alpha-D-ribose 1-diphosphate + AMP + H(+). The protein operates within metabolic intermediate biosynthesis; 5-phospho-alpha-D-ribose 1-diphosphate biosynthesis; 5-phospho-alpha-D-ribose 1-diphosphate from D-ribose 5-phosphate (route I): step 1/1. Activated by magnesium and inorganic phosphate. Competitively or non-competitively inhibited by ADP, 2,3-bisphosphoglyceride or GDP. In terms of biological role, catalyzes the synthesis of phosphoribosylpyrophosphate (PRPP) that is essential for nucleotide synthesis. In Gallus gallus (Chicken), this protein is Ribose-phosphate pyrophosphokinase 2 (PRPS2).